The following is a 445-amino-acid chain: Probable glycine dehydrogenase (decarboxylating) subunit 1 (445 aa).

This sequence belongs to the GcvP family. N-terminal subunit subfamily. The glycine cleavage system is composed of four proteins: P, T, L and H. In this organism, the P 'protein' is a heterodimer of two subunits.

It catalyses the reaction N(6)-[(R)-lipoyl]-L-lysyl-[glycine-cleavage complex H protein] + glycine + H(+) = N(6)-[(R)-S(8)-aminomethyldihydrolipoyl]-L-lysyl-[glycine-cleavage complex H protein] + CO2. Functionally, the glycine cleavage system catalyzes the degradation of glycine. The P protein binds the alpha-amino group of glycine through its pyridoxal phosphate cofactor; CO(2) is released and the remaining methylamine moiety is then transferred to the lipoamide cofactor of the H protein. This is Probable glycine dehydrogenase (decarboxylating) subunit 1 from Anaeromyxobacter sp. (strain Fw109-5).